Reading from the N-terminus, the 183-residue chain is Orotate phosphoribosyltransferase (183 aa).

5-phospho-alpha-D-ribose 1-diphosphate-binding positions include Arg-21, Lys-88, and 112 to 120 (EDVVTTGES). Residues Thr-116 and Arg-144 each contribute to the orotate site.

The protein belongs to the purine/pyrimidine phosphoribosyltransferase family. PyrE subfamily. As to quaternary structure, homodimer. Mg(2+) serves as cofactor.

It catalyses the reaction orotidine 5'-phosphate + diphosphate = orotate + 5-phospho-alpha-D-ribose 1-diphosphate. It functions in the pathway pyrimidine metabolism; UMP biosynthesis via de novo pathway; UMP from orotate: step 1/2. Catalyzes the transfer of a ribosyl phosphate group from 5-phosphoribose 1-diphosphate to orotate, leading to the formation of orotidine monophosphate (OMP). The sequence is that of Orotate phosphoribosyltransferase from Thermus thermophilus (strain ATCC 27634 / DSM 579 / HB8).